A 158-amino-acid chain; its full sequence is 3-hydroxyacyl-[acyl-carrier-protein] dehydratase FabZ (158 aa).

Residue His61 is part of the active site.

Belongs to the thioester dehydratase family. FabZ subfamily.

It is found in the cytoplasm. The enzyme catalyses a (3R)-hydroxyacyl-[ACP] = a (2E)-enoyl-[ACP] + H2O. Its function is as follows. Involved in unsaturated fatty acids biosynthesis. Catalyzes the dehydration of short chain beta-hydroxyacyl-ACPs and long chain saturated and unsaturated beta-hydroxyacyl-ACPs. The chain is 3-hydroxyacyl-[acyl-carrier-protein] dehydratase FabZ from Methylobacterium radiotolerans (strain ATCC 27329 / DSM 1819 / JCM 2831 / NBRC 15690 / NCIMB 10815 / 0-1).